The primary structure comprises 393 residues: Uroporphyrinogen decarboxylase, chloroplastic (393 aa).

Positions 1–64 (MATACPPLSL…AGERNQREEV (64 aa)) are disordered. Positions 23–37 (AGPNAGSSRPSAAAP) are enriched in low complexity. The segment covering 38–50 (SERRSWRRPRPDG) has biased composition (basic and acidic residues). Residues 73–77 (RQAGR), Phe92, Ser122, Asp123, Tyr200, Ser255, and His370 contribute to the substrate site.

This sequence belongs to the uroporphyrinogen decarboxylase family. As to quaternary structure, homodimer.

Its subcellular location is the plastid. The protein localises to the chloroplast. The catalysed reaction is uroporphyrinogen III + 4 H(+) = coproporphyrinogen III + 4 CO2. Its pathway is porphyrin-containing compound metabolism; protoporphyrin-IX biosynthesis; coproporphyrinogen-III from 5-aminolevulinate: step 4/4. Its function is as follows. Catalyzes the decarboxylation of four acetate groups of uroporphyrinogen-III to yield coproporphyrinogen-III. The protein is Uroporphyrinogen decarboxylase, chloroplastic (LES22) of Zea mays (Maize).